Reading from the N-terminus, the 367-residue chain is MKCMPPPLREILDDVLAGHRLTEEEAVRLLATRDRGVWEIAAAANELRERKVGNVVTYVRNQNINVTNLCVNACGFCGFSRKPGDADAFFYGETAVRGKAREARERGVTEVCTVSGLHPEFDVQSYAEIYSWIRDEVPGVHIHASNPMEVAYAARRSGISTREVMELMRGAGLSTLCGTAAEILVDDVRRVICPDKIDTGSWARIIREAHGLGIRSTATIMYGHCESEADRARHLNILREIQDETHGFTEFVPLSFIHKNTPLYRAGLARAGATGREDLLMFAVARLFLDNFDHIQASWVKVGTKMAEMALLSGADDLGGTLFEESISREAGARDTDYLDPAEMRRMAEDLGRVLRQRTTTYALLPG.

The Radical SAM core domain occupies 56-290 (VTYVRNQNIN…MFAVARLFLD (235 aa)). Residues C70, C74, and C77 each coordinate [4Fe-4S] cluster.

It belongs to the radical SAM superfamily. CofH family. Consists of two subunits, CofG and CofH. Requires [4Fe-4S] cluster as cofactor.

It carries out the reaction 5-amino-6-(D-ribitylamino)uracil + L-tyrosine + S-adenosyl-L-methionine = 5-amino-5-(4-hydroxybenzyl)-6-(D-ribitylimino)-5,6-dihydrouracil + 2-iminoacetate + 5'-deoxyadenosine + L-methionine + H(+). It functions in the pathway cofactor biosynthesis; coenzyme F0 biosynthesis. In terms of biological role, catalyzes the radical-mediated synthesis of 5-amino-5-(4-hydroxybenzyl)-6-(D-ribitylimino)-5,6-dihydrouracil from 5-amino-6-(D-ribitylamino)uracil and L-tyrosine. The sequence is that of 5-amino-6-(D-ribitylamino)uracil--L-tyrosine 4-hydroxyphenyl transferase from Methanoculleus marisnigri (strain ATCC 35101 / DSM 1498 / JR1).